The sequence spans 364 residues: MRVLVSGGGTGGHIYPALALIREIKKLNPEARFLYIGTENGLESTIVPKAGIPFQSIVISGFKRKISLDNVKTVMRFLKGVQDSKRYIRRFNPDIVIGTGGYVCGPVVYAAAKLGIPTIVHEQNSVPGVTNKFLSRYVDKVAVCFEAAAEHFPQSKVVMTGNPRASEVMDQNGMKGKRSVGLSLPKKSVLIFGGSRGARPINDAFVEAIEQFGNKSYEILYVTGEVHYDKVMDAVKQKGNPNNVIIKPFIHNMPEVLTGVDLVVSRAGATTLAELTALGKPSVLIPSPYVTNNHQEKNARSVVDKGAAKMLLEKDLTAETLIRDIDEILLDAQTLQNMKLAAGQLGIPDAANKLYEVMNKLVKK.

UDP-N-acetyl-alpha-D-glucosamine-binding positions include 10-12, N124, S195, I250, and Q295; that span reads TGG.

The protein belongs to the glycosyltransferase 28 family. MurG subfamily.

It is found in the cell membrane. The enzyme catalyses di-trans,octa-cis-undecaprenyl diphospho-N-acetyl-alpha-D-muramoyl-L-alanyl-D-glutamyl-meso-2,6-diaminopimeloyl-D-alanyl-D-alanine + UDP-N-acetyl-alpha-D-glucosamine = di-trans,octa-cis-undecaprenyl diphospho-[N-acetyl-alpha-D-glucosaminyl-(1-&gt;4)]-N-acetyl-alpha-D-muramoyl-L-alanyl-D-glutamyl-meso-2,6-diaminopimeloyl-D-alanyl-D-alanine + UDP + H(+). The protein operates within cell wall biogenesis; peptidoglycan biosynthesis. Its function is as follows. Cell wall formation. Catalyzes the transfer of a GlcNAc subunit on undecaprenyl-pyrophosphoryl-MurNAc-pentapeptide (lipid intermediate I) to form undecaprenyl-pyrophosphoryl-MurNAc-(pentapeptide)GlcNAc (lipid intermediate II). This chain is UDP-N-acetylglucosamine--N-acetylmuramyl-(pentapeptide) pyrophosphoryl-undecaprenol N-acetylglucosamine transferase 1, found in Bacillus cereus (strain ATCC 10987 / NRS 248).